The following is a 509-amino-acid chain: Heat shock 70 kDa protein 14 (509 aa).

It belongs to the heat shock protein 70 family. In terms of assembly, component of ribosome-associated complex (RAC), a heterodimer composed of Hsp70/DnaK-type chaperone HSPA14 and Hsp40/DnaJ-type chaperone DNAJC2.

The protein localises to the cytoplasm. It is found in the cytosol. Component of the ribosome-associated complex (RAC), a complex involved in folding or maintaining nascent polypeptides in a folding-competent state. In the RAC complex, binds to the nascent polypeptide chain, while DNAJC2 stimulates its ATPase activity. The chain is Heat shock 70 kDa protein 14 (Hspa14) from Rattus norvegicus (Rat).